Reading from the N-terminus, the 376-residue chain is Dihydroorotate dehydrogenase (quinone) (376 aa).

Residues Ala-78–Lys-82 and Thr-102 each bind FMN. Lys-82 contacts substrate. Residue Asn-127–Phe-131 coordinates substrate. The FMN site is built by Asn-157 and Asn-190. A substrate-binding site is contributed by Asn-190. Ser-193 functions as the Nucleophile in the catalytic mechanism. Asn-195 contacts substrate. Lys-228 and Thr-256 together coordinate FMN. Asn-257–Thr-258 serves as a coordination point for substrate. Residues Gly-286, Gly-315, and Tyr-336–Thr-337 contribute to the FMN site.

The protein belongs to the dihydroorotate dehydrogenase family. Type 2 subfamily. Monomer. FMN is required as a cofactor.

It localises to the cell membrane. It carries out the reaction (S)-dihydroorotate + a quinone = orotate + a quinol. It functions in the pathway pyrimidine metabolism; UMP biosynthesis via de novo pathway; orotate from (S)-dihydroorotate (quinone route): step 1/1. Functionally, catalyzes the conversion of dihydroorotate to orotate with quinone as electron acceptor. The sequence is that of Dihydroorotate dehydrogenase (quinone) from Nostoc sp. (strain PCC 7120 / SAG 25.82 / UTEX 2576).